Reading from the N-terminus, the 464-residue chain is UDP-N-acetylmuramate--L-alanine ligase (464 aa).

111 to 117 lines the ATP pocket; the sequence is GAHGKTT.

This sequence belongs to the MurCDEF family.

It is found in the cytoplasm. It catalyses the reaction UDP-N-acetyl-alpha-D-muramate + L-alanine + ATP = UDP-N-acetyl-alpha-D-muramoyl-L-alanine + ADP + phosphate + H(+). The protein operates within cell wall biogenesis; peptidoglycan biosynthesis. Its function is as follows. Cell wall formation. The polypeptide is UDP-N-acetylmuramate--L-alanine ligase (Dictyoglomus turgidum (strain DSM 6724 / Z-1310)).